We begin with the raw amino-acid sequence, 293 residues long: Ribosomal protein L11 methyltransferase (293 aa).

Residues Thr145, Gly166, Asp188, and Asn230 each coordinate S-adenosyl-L-methionine.

This sequence belongs to the methyltransferase superfamily. PrmA family.

Its subcellular location is the cytoplasm. The catalysed reaction is L-lysyl-[protein] + 3 S-adenosyl-L-methionine = N(6),N(6),N(6)-trimethyl-L-lysyl-[protein] + 3 S-adenosyl-L-homocysteine + 3 H(+). Methylates ribosomal protein L11. The sequence is that of Ribosomal protein L11 methyltransferase from Shewanella baltica (strain OS195).